The following is a 252-amino-acid chain: 3-deoxy-manno-octulosonate cytidylyltransferase (252 aa).

It belongs to the KdsB family.

Its subcellular location is the cytoplasm. It catalyses the reaction 3-deoxy-alpha-D-manno-oct-2-ulosonate + CTP = CMP-3-deoxy-beta-D-manno-octulosonate + diphosphate. It participates in nucleotide-sugar biosynthesis; CMP-3-deoxy-D-manno-octulosonate biosynthesis; CMP-3-deoxy-D-manno-octulosonate from 3-deoxy-D-manno-octulosonate and CTP: step 1/1. The protein operates within bacterial outer membrane biogenesis; lipopolysaccharide biosynthesis. Activates KDO (a required 8-carbon sugar) for incorporation into bacterial lipopolysaccharide in Gram-negative bacteria. In Xylella fastidiosa (strain Temecula1 / ATCC 700964), this protein is 3-deoxy-manno-octulosonate cytidylyltransferase.